Reading from the N-terminus, the 204-residue chain is MASLNGPLRVGIGGPVGSGKTALMEQLCRRFRDRYEICAITNDIYTKEDARILTVAGALPEERILGVETGGCPHTAIREDASINLAAVAEMRRRFPKLDLVLIESGGDNLAATFSPELADITLYVIDVAGGEKIPRKGGPGITRSDLLIVNKTDLAPLVGADLSVMESDTQRMRGTRPYVFASLREGHGADRVATFIVEAGGLR.

14–21 (GPVGSGKT) is a GTP binding site.

The protein belongs to the SIMIBI class G3E GTPase family. UreG subfamily. In terms of assembly, homodimer. UreD, UreF and UreG form a complex that acts as a GTP-hydrolysis-dependent molecular chaperone, activating the urease apoprotein by helping to assemble the nickel containing metallocenter of UreC. The UreE protein probably delivers the nickel.

The protein localises to the cytoplasm. Facilitates the functional incorporation of the urease nickel metallocenter. This process requires GTP hydrolysis, probably effectuated by UreG. The chain is Urease accessory protein UreG 1 from Methylorubrum populi (strain ATCC BAA-705 / NCIMB 13946 / BJ001) (Methylobacterium populi).